Reading from the N-terminus, the 201-residue chain is 3-isopropylmalate dehydratase small subunit (201 aa).

Belongs to the LeuD family. LeuD type 1 subfamily. As to quaternary structure, heterodimer of LeuC and LeuD.

The catalysed reaction is (2R,3S)-3-isopropylmalate = (2S)-2-isopropylmalate. The protein operates within amino-acid biosynthesis; L-leucine biosynthesis; L-leucine from 3-methyl-2-oxobutanoate: step 2/4. Functionally, catalyzes the isomerization between 2-isopropylmalate and 3-isopropylmalate, via the formation of 2-isopropylmaleate. The protein is 3-isopropylmalate dehydratase small subunit of Rhodopseudomonas palustris (strain BisB18).